A 165-amino-acid chain; its full sequence is UPF0254 protein MmarC5_0742 (165 aa).

The protein belongs to the UPF0254 family.

The sequence is that of UPF0254 protein MmarC5_0742 from Methanococcus maripaludis (strain C5 / ATCC BAA-1333).